The primary structure comprises 466 residues: Catalase ifgD (466 aa).

Positions 1–22 (MAPNYAKKCPVMGKAPSSGHSS) are disordered. The active site involves H48. Residue Y337 coordinates heme.

Belongs to the catalase family. Heme is required as a cofactor.

It functions in the pathway alkaloid biosynthesis; ergot alkaloid biosynthesis. Functionally, catalase; part of the gene cluster that mediates the biosynthesis of isofumigaclavines, fungal ergot alkaloids. The tryptophan dimethylallyltransferase ifgA catalyzes the first step of ergot alkaloid biosynthesis by condensing dimethylallyl diphosphate (DMAP) and tryptophan to form 4-dimethylallyl-L-tryptophan. The second step is catalyzed by the methyltransferase ifgB that methylates 4-dimethylallyl-L-tryptophan in the presence of S-adenosyl-L-methionine, resulting in the formation of N-methyl-dimethylallyl-L-tryptophan. The catalase ifgD and the FAD-dependent oxidoreductase ifgC then transform N-methyl-dimethylallyl-L-tryptophan to chanoclavine-I which is further oxidized by ifgE in the presence of NAD(+), resulting in the formation of chanoclavine-I aldehyde. The chanoclavine-I aldehyde reductases ifgG and/or fgaOx3 reduce chanoclavine-I aldehyde to dihydrochanoclavine-I aldehyde that spontaneously dehydrates to form 6,8-dimethyl-6,7-didehydroergoline. The festuclavine dehydrogenases ifgF1 and/or ifgF2 then catalyze the reduction of 6,8-dimethyl-6,7-didehydroergoline to form festuclavine. Hydrolysis of festuclavine by a yet undetermined cytochrome P450 monooxygenase (called ifgH) then leads to the formation of isofumigaclavine B which is in turn acetylated by ifgI to isofumigaclavine A. Penicillium roqueforti has interestingly at least two sets of genes for the consumption of chanoclavine-I aldehyde on three different loci, the OYEs ifgG/fgaOx3 and the festuclavine synthase homologs ifgF1/ifgF2. The reason for the duplication of these genes is unclear, probably to ensure the conversion of chanoclavine-I aldehyde by differential gene expression under various environmental conditions. In Penicillium roqueforti (strain FM164), this protein is Catalase ifgD.